Consider the following 427-residue polypeptide: Serine hydroxymethyltransferase (427 aa).

(6S)-5,6,7,8-tetrahydrofolate is bound by residues L118 and G122 to L124. K227 is subject to N6-(pyridoxal phosphate)lysine. Residues E243 and S351–F353 each bind (6S)-5,6,7,8-tetrahydrofolate.

This sequence belongs to the SHMT family. Homodimer. It depends on pyridoxal 5'-phosphate as a cofactor.

The protein localises to the cytoplasm. It catalyses the reaction (6R)-5,10-methylene-5,6,7,8-tetrahydrofolate + glycine + H2O = (6S)-5,6,7,8-tetrahydrofolate + L-serine. It functions in the pathway one-carbon metabolism; tetrahydrofolate interconversion. The protein operates within amino-acid biosynthesis; glycine biosynthesis; glycine from L-serine: step 1/1. In terms of biological role, catalyzes the reversible interconversion of serine and glycine with tetrahydrofolate (THF) serving as the one-carbon carrier. This reaction serves as the major source of one-carbon groups required for the biosynthesis of purines, thymidylate, methionine, and other important biomolecules. Also exhibits THF-independent aldolase activity toward beta-hydroxyamino acids, producing glycine and aldehydes, via a retro-aldol mechanism. This Thermotoga neapolitana (strain ATCC 49049 / DSM 4359 / NBRC 107923 / NS-E) protein is Serine hydroxymethyltransferase.